We begin with the raw amino-acid sequence, 1879 residues long: Protein TIC 214 (1879 aa).

Helical transmembrane passes span 18–38 (IINSVVVVGLYYGFLTTFSIG), 67–87 (FITGQLMMFISIYYAPLHLAL), 90–110 (PHTITVLALPYLLFHFFWNNH), 127–147 (LSIQCVFLNNLIFQLFNHFIL), 175–195 (VGWLIGHILFMKWVGLVLVWI), and 218–238 (IFSILLFITCVYYLGRIPSPI). Positions 243–291 (LKETEERGESEEERDVEKTSETKGTKQEQEGSTEEDPSPSLFSEEKEDP) are disordered. The segment covering 257-271 (DVEKTSETKGTKQEQ) has biased composition (basic and acidic residues).

This sequence belongs to the TIC214 family. In terms of assembly, part of the Tic complex.

The protein resides in the plastid. It is found in the chloroplast inner membrane. Involved in protein precursor import into chloroplasts. May be part of an intermediate translocation complex acting as a protein-conducting channel at the inner envelope. This Morus indica (Mulberry) protein is Protein TIC 214.